Reading from the N-terminus, the 271-residue chain is Thiazole synthase (271 aa).

Lys-95 serves as the catalytic Schiff-base intermediate with DXP. Residues Gly-156, 182–183, and 204–205 contribute to the 1-deoxy-D-xylulose 5-phosphate site; these read AG and NT.

It belongs to the ThiG family. In terms of assembly, homotetramer. Forms heterodimers with either ThiH or ThiS.

The protein resides in the cytoplasm. The enzyme catalyses [ThiS sulfur-carrier protein]-C-terminal-Gly-aminoethanethioate + 2-iminoacetate + 1-deoxy-D-xylulose 5-phosphate = [ThiS sulfur-carrier protein]-C-terminal Gly-Gly + 2-[(2R,5Z)-2-carboxy-4-methylthiazol-5(2H)-ylidene]ethyl phosphate + 2 H2O + H(+). It participates in cofactor biosynthesis; thiamine diphosphate biosynthesis. Catalyzes the rearrangement of 1-deoxy-D-xylulose 5-phosphate (DXP) to produce the thiazole phosphate moiety of thiamine. Sulfur is provided by the thiocarboxylate moiety of the carrier protein ThiS. In vitro, sulfur can be provided by H(2)S. The sequence is that of Thiazole synthase from Shewanella amazonensis (strain ATCC BAA-1098 / SB2B).